Here is a 356-residue protein sequence, read N- to C-terminus: Dihydroorotate dehydrogenase (quinone) (356 aa).

FMN is bound by residues A67–K71 and T91. Position 71 (K71) interacts with substrate. N116–F120 contributes to the substrate binding site. 2 residues coordinate FMN: N153 and N186. A substrate-binding site is contributed by N186. The active-site Nucleophile is S189. Substrate is bound at residue N191. Residues K228 and T256 each coordinate FMN. N257–T258 contacts substrate. FMN is bound by residues G282, G311, and Y332–T333.

The protein belongs to the dihydroorotate dehydrogenase family. Type 2 subfamily. As to quaternary structure, monomer. FMN serves as cofactor.

The protein resides in the cell membrane. The catalysed reaction is (S)-dihydroorotate + a quinone = orotate + a quinol. Its pathway is pyrimidine metabolism; UMP biosynthesis via de novo pathway; orotate from (S)-dihydroorotate (quinone route): step 1/1. Functionally, catalyzes the conversion of dihydroorotate to orotate with quinone as electron acceptor. The chain is Dihydroorotate dehydrogenase (quinone) from Pseudarthrobacter chlorophenolicus (strain ATCC 700700 / DSM 12829 / CIP 107037 / JCM 12360 / KCTC 9906 / NCIMB 13794 / A6) (Arthrobacter chlorophenolicus).